The primary structure comprises 71 residues: AENFYYVILYLMVMIGMFSFIIVAILVSTVKSKRREHSNDPYHQYIVEDWQEKYKSQILHFEEAKATIHEN.

The chain crosses the membrane as a helical span at residues 7-27 (VILYLMVMIGMFSFIIVAILV). The Cytoplasmic portion of the chain corresponds to 28 to 71 (STVKSKRREHSNDPYHQYIVEDWQEKYKSQILHFEEAKATIHEN).

Belongs to the potassium channel KCNE family. In terms of assembly, interacts with KCNB1. Associates with KCNH2/ERG1. May associate with KCNQ2 and KCNQ3. Associates with HCN1 and probably HCN2. Heteromultimer with KCNC2. Interacts with KCNC2. Interacts with KCNQ1; forms a heterooligomer complex that targets to the membrane raft and leading to currents with an apparently instantaneous activation, a rapid deactivation process and a linear current-voltage relationship and decreases the amplitude of the outward current. As to expression, detected in heart; expression is highest in the SA node and the right atrium, and barely detectable in the ventricle.

It is found in the cell membrane. The protein localises to the apical cell membrane. In terms of biological role, ancillary protein that functions as a regulatory subunit of the voltage-gated potassium (Kv) channel complex composed of pore-forming and potassium-conducting alpha subunits and of regulatory beta subunits. KCNE2 beta subunit modulates the gating kinetics and enhances stability of the channel complex. Alters the gating of the delayed rectifier Kv channel containing KCNB1 alpha subunit. Associates with KCNH2/HERG alpha subunit Kv channel to form the rapidly activating component of the delayed rectifying potassium current (IKr) in heart. May associate with KCNQ2 and/or KCNQ3 alpha subunits to modulate the native M-type current. May associate with HCN1 and HCN2 channel subunits to increase potassium current. Forms a heterooligomer complex with KCNQ1/KVLQT1 alpha subunits which leads to currents with an apparently instantaneous activation, a rapid deactivation process and a linear current-voltage relationship and decreases the amplitude of the outward current. KCNQ1-KCNE2 channel associates with Na(+)-coupled myo-inositol symporter in the apical membrane of choroid plexus epithelium and regulates the myo-inositol gradient between blood and cerebrospinal fluid with an impact on neuron excitability. The polypeptide is Potassium voltage-gated channel subfamily E member 2 (KCNE2) (Oryctolagus cuniculus (Rabbit)).